The chain runs to 432 residues: Amino acid transporter ANT1 (432 aa).

The disordered stretch occupies residues 1-30 (MAIKDLTATTGDSSLPLIKSPPSETTGGDR). Topologically, residues 1–35 (MAIKDLTATTGDSSLPLIKSPPSETTGGDRTSALQ) are cytoplasmic. The chain crosses the membrane as a helical span at residues 36-56 (TLGNIIVSIVGTGVLGLPYAF). At 57–62 (RIAGWL) the chain is on the lumenal side. The chain crosses the membrane as a helical span at residues 63-83 (AGSLGVIIVGFATYYCMLLLI). Residues 84-115 (QCRDKLESEEGEEESKTYGDLGFKCMGTKGRY) are Cytoplasmic-facing. Residues 116 to 136 (LTEFLIFTAQCGGSVAYLVFI) form a helical membrane-spanning segment. At 137–147 (GRNLSSIFSSY) the chain is on the lumenal side. Residues 148 to 168 (GLSMVSFILILVPIEVGLSWI) form a helical membrane-spanning segment. Residues 169–172 (TSLS) lie on the Cytoplasmic side of the membrane. The chain crosses the membrane as a helical span at residues 173–193 (ALSPFSIFADICNIIAMCFVV). Topologically, residues 194 to 219 (KENVEMVIEGDFSFSDRTAISSTIGG) are lumenal. The chain crosses the membrane as a helical span at residues 220–240 (LPFAGGVAVFCFEGFAMTLAL). The Cytoplasmic segment spans residues 241 to 256 (ESSMREREAFPKLLAK). Residues 257-277 (VLAGITFVYVLFGFCGYMAYG) form a helical membrane-spanning segment. Over 278-292 (DQTKDIITLNLPNNW) the chain is Lumenal. The chain crosses the membrane as a helical span at residues 293–313 (SAIAVQIGLCVGLTFTFPIMV). Residues 314-353 (HPLNEIIEQKLKRIDWLQKHHNGYSNETGSVSKFAIFTTR) lie on the Cytoplasmic side of the membrane. The helical transmembrane segment at 354–374 (TLLVVGLAAIASLVPGFGTFA) threads the bilayer. The Lumenal portion of the chain corresponds to 375 to 379 (SLVGS). Residues 380-400 (TLCALISFVLPASYHLTLLGP) traverse the membrane as a helical segment. At 401–410 (SLNVWNKSID) the chain is on the cytoplasmic side. Residues 411–431 (VFIVICGLIFAVYGTYNTIVG) form a helical membrane-spanning segment. A topological domain (lumenal) is located at residue Val432.

The protein belongs to the amino acid/polyamine transporter 2 family. Amino acid/auxin permease (AAAP) (TC 2.A.18.8) subfamily. As to expression, ubiquitous. Highly expressed in flowers and cauline leaves and at lower levels in stems, leaves and roots.

The protein localises to the endoplasmic reticulum membrane. Translocates aromatic and neutral amino acids such as tyrosine, tryptophan, phenylalanine, histidine, proline, leucine, valine, glutamine, as well as arginine. Transports the auxins indole-3-acetic acid (IAA) and 2,4-dichlorophenoxyacetic acid (2,4-D). In Arabidopsis thaliana (Mouse-ear cress), this protein is Amino acid transporter ANT1.